Reading from the N-terminus, the 522-residue chain is Zinc finger and BTB domain-containing protein 18 (522 aa).

Residues 24–91 enclose the BTB domain; the sequence is CDCTVLVGDA…MYEGKLQFKD (68 aa). Residues 121–143 show a composition bias toward basic and acidic residues; it reads ATTEADSTKKEEDASSCSDKVES. A disordered region spans residues 121-166; that stretch reads ATTEADSTKKEEDASSCSDKVESLSDGSSHMAGDLPSDEDEGEDDK. A Phosphoserine modification is found at Ser-157. Residue Lys-273 forms a Glycyl lysine isopeptide (Lys-Gly) (interchain with G-Cter in SUMO2) linkage. Residues 310–427 form an interaction with DNMT3A region; it reads EPAHLAPLRE…TFSCMYTLKR (118 aa). 4 consecutive C2H2-type zinc fingers follow at residues 370–392, 410–432, 438–460, and 466–489; these read FMCP…LSTH, PTCS…ERTH, YTCT…AVVH, and HACK…RKFH. Phosphoserine is present on residues Ser-516 and Ser-517.

The protein belongs to the krueppel C2H2-type zinc-finger protein family. ZBTB18 subfamily. In terms of assembly, interacts with DNMT3A.

It is found in the nucleus. Its function is as follows. Transcriptional repressor that plays a role in various developmental processes such as myogenesis and brain development. Specifically binds the consensus DNA sequence 5'-[AC]ACATCTG[GT][AC]-3' which contains the E box core, and acts by recruiting chromatin remodeling multiprotein complexes. Plays a key role in myogenesis by directly repressing the expression of ID2 and ID3, 2 inhibitors of skeletal myogenesis. Also involved in controlling cell division of progenitor cells and regulating the survival of postmitotic cortical neurons. May also play a role in the organization of chromosomes in the nucleus. The polypeptide is Zinc finger and BTB domain-containing protein 18 (Zbtb18) (Rattus norvegicus (Rat)).